Consider the following 197-residue polypeptide: Ribonuclease HII (197 aa).

The RNase H type-2 domain occupies 11–197 (HLIAGVDEVG…FAPVKKILGL (187 aa)). Residues aspartate 17, glutamate 18, and aspartate 109 each contribute to the a divalent metal cation site.

Belongs to the RNase HII family. It depends on Mn(2+) as a cofactor. Requires Mg(2+) as cofactor.

The protein resides in the cytoplasm. It catalyses the reaction Endonucleolytic cleavage to 5'-phosphomonoester.. Endonuclease that specifically degrades the RNA of RNA-DNA hybrids. The protein is Ribonuclease HII of Actinobacillus pleuropneumoniae serotype 7 (strain AP76).